Here is a 161-residue protein sequence, read N- to C-terminus: MLQLKFIWPVARITPIYRPFTSHPFRNLATSSSISSTKAKTTKTDTTPLKLSNELYAIFKIHNRPYLVTEGDRVILPFKLKQAEVGDILNMTDVTTLGSRNYKLVGHPINTSLYTLKATVVGKTKRAFQTREVTKRRNRRVRHAKSKGDLTILRISELSMN.

Residues 1 to 35 (MLQLKFIWPVARITPIYRPFTSHPFRNLATSSSIS) constitute a mitochondrion transit peptide.

The protein belongs to the bacterial ribosomal protein bL21 family. As to quaternary structure, component of the mitochondrial large ribosomal subunit (mt-LSU). Mature yeast 74S mitochondrial ribosomes consist of a small (37S) and a large (54S) subunit. The 37S small subunit contains a 15S ribosomal RNA (15S mt-rRNA) and 34 different proteins. The 54S large subunit contains a 21S rRNA (21S mt-rRNA) and 46 different proteins.

It is found in the mitochondrion. Its function is as follows. Component of the mitochondrial ribosome (mitoribosome), a dedicated translation machinery responsible for the synthesis of mitochondrial genome-encoded proteins, including at least some of the essential transmembrane subunits of the mitochondrial respiratory chain. The mitoribosomes are attached to the mitochondrial inner membrane and translation products are cotranslationally integrated into the membrane. This chain is Large ribosomal subunit protein bL21m (MRPL49), found in Saccharomyces cerevisiae (strain ATCC 204508 / S288c) (Baker's yeast).